The chain runs to 638 residues: Epithelial sodium channel subunit beta (638 aa).

Residues 1–50 lie on the Cytoplasmic side of the membrane; it reads MPVKKYLLKCLHRLQKGPGYTYKELLVWYCNNTNTHGPKRIICEGPKKKA. A helical transmembrane segment spans residues 51–71; that stretch reads MWFLLTLLFACLVCWQWGVFI. Residues 72-530 are Extracellular-facing; sequence QTYLSWEVSV…GGQFGFWMGG (459 aa). 9 disulfides stabilise this stretch: Cys98/Cys270, Cys182/Cys187, Cys194/Cys201, Cys247/Cys254, Cys359/Cys446, Cys384/Cys442, Cys388/Cys438, Cys397/Cys424, and Cys399/Cys413. N-linked (GlcNAc...) asparagine glycans are attached at residues Asn135 and Asn141. Residue Asn205 is glycosylated (N-linked (GlcNAc...) asparagine). A helical transmembrane segment spans residues 531–551; it reads SVLCLIEFGEIIIDFIWITII. Residues 552-638 lie on the Cytoplasmic side of the membrane; the sequence is KLVASCKGLR…MESDSEVEAI (87 aa). The interval 594 to 620 is disordered; that stretch reads SCRPHGEVYPDQQTLPIPGTPPPNYDS. Residues 614-618 carry the PY motif; recruits WW domain-containing proteins and is thereby required for ubiquitination and inhibition of the channel by NEDD4 and NEDD4L motif; that stretch reads PPPNY. Phosphoserine occurs at positions 631 and 633.

It belongs to the amiloride-sensitive sodium channel (TC 1.A.6) family. SCNN1B subfamily. As to quaternary structure, component of the heterotrimeric epithelial sodium channel (ENaC) composed of an alpha/SCNN1A, a beta/SCNN1B and a gamma/SCNN1G subunit. Interacts with WWP1 (via WW domains). Interacts with WWP2 (via WW domains); inhibits the channel. Interacts with the full-length immature form of PCSK9 (pro-PCSK9). Interacts (N-glycosylated) with BPIFA1; the interaction is direct and inhibits the proteolytic processing of SCNN1A and SCNN1G and the activation of ENaC. In terms of processing, ubiquitinated. Can be ubiquitinated at multiple sites and undergo monoubiquitination and polyubiquitination. Ubiquitination by NEDD4 or NEDD4L inhibits the ENaC channel through endocytosis, intracellular retention and degradation of its individual subunits. However, some studies could not confirm the ubiquitination of this subunit of the ENaC. N-glycosylated. N-glycosylation is required for interaction with BPIFA1. Post-translationally, phosphorylated on serine and threonine residues. Aldosterone and insulin increase the basal level of phosphorylation. As to expression, lung and kidney.

The protein resides in the apical cell membrane. The protein localises to the cytoplasmic vesicle membrane. The catalysed reaction is Na(+)(in) = Na(+)(out). With respect to regulation, originally identified and characterized by its inhibition by the diuretic drug amiloride. Its function is as follows. This is one of the three pore-forming subunits of the heterotrimeric epithelial sodium channel (ENaC), a critical regulator of sodium balance and fluid homeostasis. ENaC operates in epithelial tissues, where it mediates the electrodiffusion of sodium ions from extracellular fluid through the apical membrane of cells, with water following osmotically. It plays a key role in maintaining sodium homeostasis through electrogenic sodium reabsorption in the kidneys. This subunit is not essential for ENaC function in airway surface liquid homeostasis and proper mucus clearance. This Mus musculus (Mouse) protein is Epithelial sodium channel subunit beta.